Consider the following 85-residue polypeptide: Large ribosomal subunit protein bL27 (85 aa).

Positions 1-22 (MAHKKAGGSTRNGRDSESKRLG) are disordered.

The protein belongs to the bacterial ribosomal protein bL27 family.

The protein is Large ribosomal subunit protein bL27 of Teredinibacter turnerae (strain ATCC 39867 / T7901).